An 877-amino-acid chain; its full sequence is Protein P (877 aa).

The tract at residues 1 to 183 (MHPFSQLFRN…GKPYSWGHRQ (183 aa)) is terminal protein domain (TP). The tract at residues 184–382 (LEQHNGQQHE…YCLHHIVSSL (199 aa)) is spacer. Positions 185–198 (EQHNGQQHESHLQS) are enriched in basic and acidic residues. The disordered stretch occupies residues 185 to 347 (EQHNGQQHES…PSSSGLCGGT (163 aa)). A compositionally biased stretch (polar residues) spans 233–242 (FGESQKSART). Low complexity predominate over residues 267–281 (QQGSSQVSSPRSKSS). Composition is skewed to polar residues over residues 282–302 (NFRNQTQANHSSWNQRHPTWY) and 338–347 (PSSSGLCGGT). The polymerase/reverse transcriptase domain (RT) stretch occupies residues 383–723 (EDWGPCTISG…YAELWPVARQ (341 aa)). Positions 393 to 634 (DVTIRSPRTP…HHLHFMGYVI (242 aa)) constitute a Reverse transcriptase domain. Mg(2+) is bound by residues Asp465, Asp585, and Asp586.

It belongs to the hepadnaviridae P protein family.

It catalyses the reaction DNA(n) + a 2'-deoxyribonucleoside 5'-triphosphate = DNA(n+1) + diphosphate. It carries out the reaction Endonucleolytic cleavage to 5'-phosphomonoester.. Its activity is regulated as follows. Activated by host HSP70 and HSP40 in vitro to be able to bind the epsilon loop of the pgRNA. Because deletion of the RNase H region renders the protein partly chaperone-independent, the chaperones may be needed indirectly to relieve occlusion of the RNA-binding site by this domain. Inhibited by several reverse-transcriptase inhibitors: Lamivudine, Adefovir and Entecavir. In terms of biological role, multifunctional enzyme that converts the viral RNA genome into dsDNA in viral cytoplasmic capsids. This enzyme displays a DNA polymerase activity that can copy either DNA or RNA templates, and a ribonuclease H (RNase H) activity that cleaves the RNA strand of RNA-DNA heteroduplexes in a partially processive 3'- to 5'-endonucleasic mode. Neo-synthesized pregenomic RNA (pgRNA) are encapsidated together with the P protein, and reverse-transcribed inside the nucleocapsid. Initiation of reverse-transcription occurs first by binding the epsilon loop on the pgRNA genome, and is initiated by protein priming, thereby the 5'-end of (-)DNA is covalently linked to P protein. Partial (+)DNA is synthesized from the (-)DNA template and generates the relaxed circular DNA (RC-DNA) genome. After budding and infection, the RC-DNA migrates in the nucleus, and is converted into a plasmid-like covalently closed circular DNA (cccDNA). The activity of P protein does not seem to be necessary for cccDNA generation, and is presumably released from (+)DNA by host nuclear DNA repair machinery. The chain is Protein P from Arctic squirrel hepatitis virus (ASHV).